Here is a 231-residue protein sequence, read N- to C-terminus: Putative aminodeoxychorismate lyase (231 aa).

The protein belongs to the class-IV pyridoxal-phosphate-dependent aminotransferase family. The cofactor is pyridoxal 5'-phosphate.

It localises to the cytoplasm. Its subcellular location is the nucleus. The enzyme catalyses 4-amino-4-deoxychorismate = 4-aminobenzoate + pyruvate + H(+). It participates in cofactor biosynthesis; tetrahydrofolate biosynthesis; 4-aminobenzoate from chorismate: step 2/2. In terms of biological role, converts 4-amino-4-deoxychorismate into 4-aminobenzoate (PABA) and pyruvate. In Schizosaccharomyces pombe (strain 972 / ATCC 24843) (Fission yeast), this protein is Putative aminodeoxychorismate lyase.